Consider the following 447-residue polypeptide: M-phase inducer phosphatase 3 (447 aa).

At Ser-2 the chain carries N-acetylserine. A phosphoserine mark is found at Ser-20, Ser-38, Ser-56, Ser-60, and Ser-63. Thr-66 is subject to Phosphothreonine; by CDK1. Residues 81–90 (MSASPLTTSA) are compositionally biased toward polar residues. Residues 81-109 (MSASPLTTSADLEDNGSLDSSGPLDRQLT) form a disordered region. Position 128 is a phosphoserine (Ser-128). Residue Thr-129 is modified to Phosphothreonine. The residue at position 192 (Ser-192) is a Phosphoserine; by CDK1. Phosphoserine; by PLK3 occurs at positions 213 and 220. The Rhodanese domain occupies 294 to 401 (VIERFYIIDC…FFPEYMELCD (108 aa)). Cys-350 is an active-site residue. Ser-445 is subject to Phosphoserine.

The protein belongs to the MPI phosphatase family. As to quaternary structure, interacts with MAPK14 and 14-3-3 proteins. When phosphorylated on Ser-128 and/or Thr-129, interacts with PLK1. Interacts with MARK3/C-TAK1. In terms of processing, phosphorylated by PLK4. Phosphorylated by PLK1, leading to activate the phosphatase activity. Phosphorylated by CHEK1 and MAPKAPK2. This phosphorylation creates a binding site for 14-3-3 protein and inhibits the phosphatase activity. Phosphorylation by PLK3 at Ser-213 promotes nuclear translocation. Ser-220 is a minor phosphorylation site. Phosphorylation by CDK1 occurs at G2 and G2-M transition and leads to increased activity. As to expression, spleen and thymus.

It is found in the nucleus. The catalysed reaction is O-phospho-L-tyrosyl-[protein] + H2O = L-tyrosyl-[protein] + phosphate. In terms of biological role, functions as a dosage-dependent inducer in mitotic control. Tyrosine protein phosphatase required for progression of the cell cycle. When phosphorylated, highly effective in activating G2 cells into prophase. Directly dephosphorylates CDK1 and activates its kinase activity. The chain is M-phase inducer phosphatase 3 (Cdc25c) from Mus musculus (Mouse).